Consider the following 290-residue polypeptide: Arylamine N-acetyltransferase, pineal gland isozyme NAT-10 (290 aa).

Catalysis depends on cysteine 68, which acts as the Acyl-thioester intermediate. Catalysis depends on residues histidine 107 and aspartate 122.

Belongs to the arylamine N-acetyltransferase family.

The enzyme catalyses an arylamine + acetyl-CoA = an N-acetylarylamine + CoA. This chain is Arylamine N-acetyltransferase, pineal gland isozyme NAT-10, found in Gallus gallus (Chicken).